The following is a 540-amino-acid chain: CTP synthase (540 aa).

Positions Met1 to Leu267 are amidoligase domain. Ser15 serves as a coordination point for CTP. UTP is bound at residue Ser15. Ser16–Ile21 contacts ATP. Residue Tyr56 coordinates L-glutamine. Position 73 (Asp73) interacts with ATP. Mg(2+) is bound by residues Asp73 and Glu141. CTP is bound by residues Asp148–Glu150, Lys188–Gln193, and Lys224. UTP-binding positions include Lys188 to Gln193 and Lys224. Arg240–Ala242 provides a ligand contact to ATP. Residues Thr292–Lys540 enclose the Glutamine amidotransferase type-1 domain. L-glutamine is bound at residue Gly360. Catalysis depends on Cys387, which acts as the Nucleophile; for glutamine hydrolysis. Residues Met388–Gln391, Glu411, and Arg468 each bind L-glutamine. Residues His513 and Glu515 contribute to the active site.

Belongs to the CTP synthase family. Homotetramer.

The catalysed reaction is UTP + L-glutamine + ATP + H2O = CTP + L-glutamate + ADP + phosphate + 2 H(+). The enzyme catalyses L-glutamine + H2O = L-glutamate + NH4(+). It catalyses the reaction UTP + NH4(+) + ATP = CTP + ADP + phosphate + 2 H(+). It functions in the pathway pyrimidine metabolism; CTP biosynthesis via de novo pathway; CTP from UDP: step 2/2. Allosterically activated by GTP, when glutamine is the substrate; GTP has no effect on the reaction when ammonia is the substrate. The allosteric effector GTP functions by stabilizing the protein conformation that binds the tetrahedral intermediate(s) formed during glutamine hydrolysis. Inhibited by the product CTP, via allosteric rather than competitive inhibition. Its function is as follows. Catalyzes the ATP-dependent amination of UTP to CTP with either L-glutamine or ammonia as the source of nitrogen. Regulates intracellular CTP levels through interactions with the four ribonucleotide triphosphates. This chain is CTP synthase, found in Methanocaldococcus jannaschii (strain ATCC 43067 / DSM 2661 / JAL-1 / JCM 10045 / NBRC 100440) (Methanococcus jannaschii).